Consider the following 975-residue polypeptide: E3 ubiquitin-protein ligase BRE1A (975 aa).

The interval 1–37 (MSGIGSKRAAGEPGTSVPPEKKTAVEDSGTTVETIKL) is disordered. Lysine 21 is subject to N6-acetyllysine. Position 41 is a phosphoserine (serine 41). A coiled-coil region spans residues 43–90 (TEELDIRTLQTKNRKLAEMLDQRQAIEDELREHIEKLERRQATDDASL). The segment at 125–155 (KALVVPEPEPDSDSNQERKDDRERGEGQEPA) is disordered. Phosphoserine occurs at positions 136 and 138. Residues 139–151 (NQERKDDRERGEG) show a composition bias toward basic and acidic residues. 2 coiled-coil regions span residues 168–375 (EEME…EEVV) and 429–898 (SLHK…TTKK). An N6-acetyllysine mark is found at lysine 348 and lysine 510. Positions 507–622 (DLNKTRLRSG…GKHDDGRKKE (116 aa)) are disordered. Serine 522 is subject to Phosphoserine. Residues 527–540 (EDPKDEPAELKQDS) are compositionally biased toward basic and acidic residues. Residues 543–552 (LATQSAASKA) are compositionally biased toward polar residues. Residues 558–622 (NEIKSKRDEE…GKHDDGRKKE (65 aa)) are compositionally biased toward basic and acidic residues. Serine 562 carries the post-translational modification Phosphoserine. The RING-type zinc finger occupies 922–961 (CPCCNMRKKDAVLTKCFHVFCFECVKTRYDTRQRKCPKCN).

It belongs to the BRE1 family. Component of the RNF20/40 complex (also known as BRE1 complex) probably composed of 2 copies of RNF20/BRE1A and 2 copies of RNF40/BRE1B. Interacts with UBE2E1/UBCH6. Interacts with p53/TP53 and WAC. Interacts with PAF1; the interaction mediates the association of the PAF1 and RNF20/40 complexes which is a prerequsite for recruitment of UBE2A/B. Interacts with PA2G4. Interacts with FBXL19.

Its subcellular location is the nucleus. It carries out the reaction S-ubiquitinyl-[E2 ubiquitin-conjugating enzyme]-L-cysteine + [acceptor protein]-L-lysine = [E2 ubiquitin-conjugating enzyme]-L-cysteine + N(6)-ubiquitinyl-[acceptor protein]-L-lysine.. Its pathway is protein modification; protein ubiquitination. Its function is as follows. Component of the RNF20/40 E3 ubiquitin-protein ligase complex that mediates monoubiquitination of 'Lys-120' of histone H2B (H2BK120ub1). H2BK120ub1 gives a specific tag for epigenetic transcriptional activation and is also prerequisite for histone H3 'Lys-4' and 'Lys-79' methylation (H3K4me and H3K79me, respectively). It thereby plays a central role in histone code and gene regulation. The RNF20/40 complex forms a H2B ubiquitin ligase complex in cooperation with the E2 enzyme UBE2A or UBE2B; reports about the cooperation with UBE2E1/UBCH are contradictory. Required for transcriptional activation of Hox genes. Recruited to the MDM2 promoter, probably by being recruited by p53/TP53, and thereby acts as a transcriptional coactivator. Mediates the polyubiquitination of PA2G4 leading to its proteasome-mediated degradation. This chain is E3 ubiquitin-protein ligase BRE1A (RNF20), found in Bos taurus (Bovine).